A 273-amino-acid chain; its full sequence is Urease accessory protein UreD (273 aa).

This sequence belongs to the UreD family. As to quaternary structure, ureD, UreF and UreG form a complex that acts as a GTP-hydrolysis-dependent molecular chaperone, activating the urease apoprotein by helping to assemble the nickel containing metallocenter of UreC. The UreE protein probably delivers the nickel.

It localises to the cytoplasm. Its function is as follows. Required for maturation of urease via the functional incorporation of the urease nickel metallocenter. The chain is Urease accessory protein UreD from Bacillus cereus (strain ATCC 10987 / NRS 248).